The chain runs to 563 residues: DNA polymerase III subunit tau (563 aa).

Position 45 to 52 (45 to 52 (GPRGTGKT)) interacts with ATP. 4 residues coordinate Zn(2+): C64, C73, C76, and C79.

This sequence belongs to the DnaX/STICHEL family. In terms of assembly, component of the DNA clamp loading complex consisting of tau(3):delta(1):delta'(1). The DNA polymerase III holoenzyme complex contains at least 10 different subunits organized into 3 functionally essential subassemblies: the Pol III core, the beta sliding clamp processivity factor and the clamp-loading complex. The Pol III core (subunits alpha, epsilon and theta) contains the polymerase and the 3'-5' exonuclease proofreading activities. The polymerase is tethered to the template via the dimeric beta sliding clamp processivity factor. The DNA clamp-loading complex assembles the beta sliding clamp onto the primed template and plays a central role in the organization and communication at the replication fork. Forms a complex with replicative DNA helicase DnaB (shown with G.stearothermophilus DnaB) tau(3):DnaB(6); a single ATP hydrolysis even is sufficient for complex formation. Colocalizes with DNA helicases PriA, RecQ and RecS.

It is found in the cytoplasm. Its subcellular location is the nucleoid. It carries out the reaction DNA(n) + a 2'-deoxyribonucleoside 5'-triphosphate = DNA(n+1) + diphosphate. Its function is as follows. Part of the beta sliding clamp loading complex, which hydrolyzes ATP to load the beta clamp onto primed DNA to form the DNA replication pre-initiation complex. DNA polymerase III is a complex, multichain enzyme responsible for most of the replicative DNA synthesis in bacteria. In Bacillus subtilis (strain 168), this protein is DNA polymerase III subunit tau.